A 429-amino-acid chain; its full sequence is Phosphoribosylamine--glycine ligase (429 aa).

Residues 109–316 (KDFLARHQIP…LVELCLAAID (208 aa)) enclose the ATP-grasp domain. 135–196 (VREQGAPIVV…EEFLDGEEAS (62 aa)) contacts ATP. The tract at residues 212-234 (SQDHKRVGDKDTGPNTGGMGAYS) is disordered. Over residues 213 to 223 (QDHKRVGDKDT) the composition is skewed to basic and acidic residues. Mg(2+)-binding residues include Glu286 and Asn288.

The protein belongs to the GARS family. Mg(2+) serves as cofactor. The cofactor is Mn(2+).

It carries out the reaction 5-phospho-beta-D-ribosylamine + glycine + ATP = N(1)-(5-phospho-beta-D-ribosyl)glycinamide + ADP + phosphate + H(+). It participates in purine metabolism; IMP biosynthesis via de novo pathway; N(1)-(5-phospho-D-ribosyl)glycinamide from 5-phospho-alpha-D-ribose 1-diphosphate: step 2/2. This chain is Phosphoribosylamine--glycine ligase, found in Vibrio vulnificus (strain YJ016).